The chain runs to 119 residues: Holo-[acyl-carrier-protein] synthase (119 aa).

Residues Asp-8 and Glu-53 each contribute to the Mg(2+) site.

It belongs to the P-Pant transferase superfamily. AcpS family. Mg(2+) serves as cofactor.

The protein resides in the cytoplasm. The catalysed reaction is apo-[ACP] + CoA = holo-[ACP] + adenosine 3',5'-bisphosphate + H(+). Functionally, transfers the 4'-phosphopantetheine moiety from coenzyme A to a Ser of acyl-carrier-protein. The chain is Holo-[acyl-carrier-protein] synthase from Petrotoga mobilis (strain DSM 10674 / SJ95).